The following is a 392-amino-acid chain: Alaserpin (392 aa).

The signal sequence occupies residues 1 to 16 (MKIIMCIFGLAALAMA). N-linked (GlcNAc...) asparagine glycosylation is present at Asn-85.

It belongs to the serpin family. Hemolymph.

It localises to the secreted. It is found in the extracellular space. Functionally, inhibits elastase. The protein is Alaserpin of Manduca sexta (Tobacco hawkmoth).